We begin with the raw amino-acid sequence, 254 residues long: Coproheme decarboxylase (254 aa).

Fe-coproporphyrin III contacts are provided by residues Arg136, 150-154, His177, Gln190, and Ser228; that span reads YPMDK. Residue Tyr150 is part of the active site.

This sequence belongs to the ChdC family. Type 1 subfamily. It depends on Fe-coproporphyrin III as a cofactor.

The enzyme catalyses Fe-coproporphyrin III + 2 H2O2 + 2 H(+) = heme b + 2 CO2 + 4 H2O. It carries out the reaction Fe-coproporphyrin III + H2O2 + H(+) = harderoheme III + CO2 + 2 H2O. It catalyses the reaction harderoheme III + H2O2 + H(+) = heme b + CO2 + 2 H2O. It participates in porphyrin-containing compound metabolism; protoheme biosynthesis. Involved in coproporphyrin-dependent heme b biosynthesis. Catalyzes the decarboxylation of Fe-coproporphyrin III (coproheme) to heme b (protoheme IX), the last step of the pathway. The reaction occurs in a stepwise manner with a three-propionate intermediate. The sequence is that of Coproheme decarboxylase from Bacillus licheniformis (strain ATCC 14580 / DSM 13 / JCM 2505 / CCUG 7422 / NBRC 12200 / NCIMB 9375 / NCTC 10341 / NRRL NRS-1264 / Gibson 46).